Consider the following 189-residue polypeptide: Auxin-responsive protein IAA3 (189 aa).

The EAR-like (transcriptional repression) signature appears at 12–16 (LRLGL). The tract at residues 42–65 (TDTEKEIESSSRKTETSPPRKAQI) is disordered. Positions 43 to 56 (DTEKEIESSSRKTE) are enriched in basic and acidic residues. Positions 92–179 (GIYVKVSMDG…TCKRLRIMKG (88 aa)) constitute a PB1 domain.

Belongs to the Aux/IAA family. As to quaternary structure, homodimers and heterodimers. Interacts with TPL. Interacts with TIR1, the F-box component of the Skp1-Cdc53/cullin-F-box (SCFTIR1) E3 ubiquitin ligase complex. In terms of processing, phosphorylated by phytochrome A in vitro. Highly expressed in stems and flowers. Expressed in hypocotyls, cotyledons and leaves, but barely detected in roots. Expressed in root tips. In the root meristem, specifically detected at the vascular tissue transition zone.

It is found in the nucleus. In terms of biological role, aux/IAA proteins are short-lived transcriptional factors that function as repressors of early auxin response genes at low auxin concentrations. Repression is thought to result from the interaction with auxin response factors (ARFs), proteins that bind to the auxin-responsive promoter element (AuxRE). Plays a central role in auxin regulation of root growth, in gravitropism, and in lateral root formation. Regulated by an auxin-induced protein turnover. Formation of heterodimers with ARF proteins may alter their ability to modulate early auxin response genes expression. When activated by cytokinin, restricts the expression of the PIN genes to the vascular transition zone. Induction of SHY2 in the vascular transition zone restricts BRX expression to down-regulate PIN3 and thus limit meristem growth, but proper SHY2 expression requires BRX. Involved in meristem growth and in determining its size. May participate in strigolactone signaling to regulate meristem size and lateral root formation. This chain is Auxin-responsive protein IAA3 (IAA3), found in Arabidopsis thaliana (Mouse-ear cress).